We begin with the raw amino-acid sequence, 923 residues long: Dynein axonemal intermediate chain 3 (923 aa).

The interval methionine 1–glutamate 35 is disordered. The segment covering lysine 10–methionine 19 has biased composition (basic residues). WD repeat units follow at residues glutamate 398–glutamate 438, glycine 480–threonine 536, valine 702–leucine 741, and cysteine 745–alanine 785. Residues leucine 869–glutamate 889 are a coiled coil.

Interacts with ACTR2; this interaction reduces binding of the Arp2/3 complex to the VCA domain of nucleation promoting factors. Part of the multisubunit axonemal dynein complex formed at least of two heavy chains and a number of intermediate and light chains. Found in a associated with the catalytic heavy chain DNAH2, the intermediate chain DNAI4, and the light chain DYNLT1. As to expression, strongly expressed in the testes. Detected also in brain and lung tissues.

The protein localises to the cytoplasm. Its function is as follows. Acts as a negative regulator of cell migration, invasion, and metastasis downstream of p53/TP53, through inhibition of Arp2/3 complex-mediated actin polymerization. Via its association with the multisubunit axonemal dynein complex, is potentially involved in the regulation of cilia function. May play a role in osteogenesis of dental tissue-derived mesenchymal stem cells. This chain is Dynein axonemal intermediate chain 3 (Dnai3), found in Mus musculus (Mouse).